Here is a 189-residue protein sequence, read N- to C-terminus: Xanthine phosphoribosyltransferase (189 aa).

2 residues coordinate xanthine: L20 and N27. A128–A132 provides a ligand contact to 5-phospho-alpha-D-ribose 1-diphosphate. K156 lines the xanthine pocket.

This sequence belongs to the purine/pyrimidine phosphoribosyltransferase family. Xpt subfamily. Homodimer.

The protein resides in the cytoplasm. It catalyses the reaction XMP + diphosphate = xanthine + 5-phospho-alpha-D-ribose 1-diphosphate. The protein operates within purine metabolism; XMP biosynthesis via salvage pathway; XMP from xanthine: step 1/1. Its function is as follows. Converts the preformed base xanthine, a product of nucleic acid breakdown, to xanthosine 5'-monophosphate (XMP), so it can be reused for RNA or DNA synthesis. The chain is Xanthine phosphoribosyltransferase from Lactobacillus delbrueckii subsp. bulgaricus (strain ATCC 11842 / DSM 20081 / BCRC 10696 / JCM 1002 / NBRC 13953 / NCIMB 11778 / NCTC 12712 / WDCM 00102 / Lb 14).